A 450-amino-acid chain; its full sequence is MSSAPATNYKVADISLAAFGRKDIELSENEMPGLMYIRKKYGPSQPLKGARIAGCLHMTIQTAVLIETLVALGAEVTWSSCNIFSTQDHAAAAIAAAGVPVFAWKGETEEEYQWCIEQQLFAFKDGKKLNLILDDGGDLTSLVHEKYPEMLEDCYGLSEETTTGVHHLYKSLRDGKLKVPAINVNDSVTKSKFDNLYGCRESLVDGIKRATDVMIAGKVAIVAGFGDVGKGCAMALHGMGARVIVTEIDPINALQAAVSGYQVAPMDEVASIGQIFVTTTGCRDIITGKHFEQMPEDAIVCNIGHFDIEIDVAWLKANAESVVNIKPQVDRYLMKNGRHVILLADGRLVNLGCATGHSSFVMSCSFSNQVLAQIALFNADNKEFREKFPEFAKTGPFDVGVHLLPKVLDETVARCHLDHLGAKLTTLTETQAEYLGIPEEGPYKADIYRY.

Substrate-binding residues include T59, D135, and E160. Position 161–163 (161–163 (TTT)) interacts with NAD(+). Residues K190 and D194 each contribute to the substrate site. NAD(+) contacts are provided by residues N195, 224–229 (GFGDVG), E247, 303–305 (IGH), and N350.

Belongs to the adenosylhomocysteinase family. It depends on NAD(+) as a cofactor.

The protein localises to the cytoplasm. The enzyme catalyses S-adenosyl-L-homocysteine + H2O = L-homocysteine + adenosine. The protein operates within amino-acid biosynthesis; L-homocysteine biosynthesis; L-homocysteine from S-adenosyl-L-homocysteine: step 1/1. Functionally, adenosylhomocysteine is a competitive inhibitor of S-adenosyl-L-methionine-dependent methyl transferase reactions; therefore adenosylhomocysteinase may play a key role in the control of methylations via regulation of the intracellular concentration of adenosylhomocysteine. The chain is Adenosylhomocysteinase (SAH1) from Candida albicans (strain SC5314 / ATCC MYA-2876) (Yeast).